The following is a 447-amino-acid chain: uncharacterized protein (447 aa).

The next 12 membrane-spanning stretches (helical) occupy residues 17–37 (IMMM…SSSA), 40–60 (VAGP…LFIM), 95–115 (IYWK…AIFI), 118–138 (WLPG…VTIV), 154–174 (AMIK…LLFV), 200–220 (GLIT…IIGV), 243–263 (IVAF…WNQV), 289–311 (AVIL…RILY), 333–353 (MFAI…SLFA), 361–381 (LMGS…FAHL), 393–415 (YYVK…ILIG), and 419–441 (TTSI…AYLV).

It belongs to the amino acid-polyamine-organocation (APC) superfamily.

The protein resides in the cell membrane. Its function is as follows. May participate in leucine metabolism. May transport leucine or a compound related to leucine metabolism. This is an uncharacterized protein from Bacillus subtilis (strain 168).